We begin with the raw amino-acid sequence, 496 residues long: MIDLKQYEFWFLVGSQYLYGLETLKKVEQQASKIVDSLNDDPIFPSKIVLKPVLKSSSEITEIFEKANADPKCAGVIVWMHTFSPSKMWIRGLSINKKPLLHLHTQYNREIPWDTIDMDYMNLNQSAHGDREHGFIHARMRLPRKVVVGHWEEKEVREKIAKWMRVACAIQDGRTGQIVRFGDNMREVASTEGDKVEAQIKLGWSINTWGVGELAERVKAVPDNEVEELLTEYREKYIMPEDEYSLKAIREQAKIEIALREFLKEKNAIAFTTTFEDLHDLPQLPGLAVQRLMEEGYGFGAEGDWKAAGLVRAIKVMGTGLPGGTSFMEDYTYHLTPGNELVLGAHMLEVCPTIAKEKPRIEVHPLSIGGKADPARLVFDGQEGPAVNASIVDMGNRFRLVVNKVLSVPIERKMPKLPTARVLWKPLPDFKRATTAWILAGGSHHTAFSTAIDVEYLIDWAEALEIEYVVIDENLDLEDFKKELRWNELYWGLLKR.

E302, E329, H346, and H445 together coordinate Mn(2+).

The protein belongs to the arabinose isomerase family. It depends on Mn(2+) as a cofactor.

The catalysed reaction is beta-L-arabinopyranose = L-ribulose. Its pathway is carbohydrate degradation; L-arabinose degradation via L-ribulose; D-xylulose 5-phosphate from L-arabinose (bacterial route): step 1/3. Functionally, catalyzes the conversion of L-arabinose to L-ribulose. This chain is L-arabinose isomerase, found in Thermotoga petrophila (strain ATCC BAA-488 / DSM 13995 / JCM 10881 / RKU-1).